The primary structure comprises 443 residues: Cyclic AMP receptor 4 (443 aa).

The Extracellular segment spans residues 1-11 (MKVLQEINLTY). The N-linked (GlcNAc...) asparagine glycan is linked to Asn8. Residues 12-32 (SILVIADFSSIFGCLLVLIAF) traverse the membrane as a helical segment. The Cytoplasmic segment spans residues 33-44 (KKLKLLRNHITR). The chain crosses the membrane as a helical span at residues 45–65 (VIACFCVSSLLKDIISTGLTL). The Extracellular segment spans residues 66–89 (SLGPQNEAGSTSFQCYLYAITITY). Residues 90 to 110 (GSLACWLWTLCLAFSIYNLIV) form a helical membrane-spanning segment. The Cytoplasmic segment spans residues 111-119 (KREPEPEKY). The chain crosses the membrane as a helical span at residues 120–140 (EKFYHGVCWTIPLICVIVMLA). Residues 141–161 (KKTIEPVGNWCWISEKYVGYR) lie on the Extracellular side of the membrane. The chain crosses the membrane as a helical span at residues 162-182 (FGLFYGPFFAIWIISAVLVGL). At 183–208 (TSRYTYSVIRNSVSDNKDKHMTYQFK) the chain is on the cytoplasmic side. Residues 209–229 (LINYIIVFLLCWVFAIVNRIL) form a helical membrane-spanning segment. Residues 230–263 (NGLGYYPTLPNILHTYFSVSHGFFASVTFIYNNP) are Extracellular-facing. A helical membrane pass occupies residues 264 to 284 (LMWRYWGSKIFLIFAKFGYFV). Over 285-443 (ELQRRLDRNK…DEREKKDNKF (159 aa)) the chain is Cytoplasmic. 2 disordered regions span residues 325–354 (NDISNDNQQQQQQQQTPQQPQQQFQQQQSP) and 396–443 (SFEI…DNKF). The span at 332–352 (QQQQQQQQTPQQPQQQFQQQQ) shows a compositional bias: low complexity. Residues 396–410 (SFEITQPSNDLNTIE) show a composition bias toward polar residues. Residues 411-425 (NNNNYNNNNNNNNNN) show a composition bias toward low complexity. Basic and acidic residues predominate over residues 429–443 (IEKEKDEREKKDNKF).

The protein belongs to the G-protein coupled receptor 5 family. C-terminal Ser or Thr residues may be phosphorylated.

The protein resides in the membrane. Its function is as follows. Receptor for cAMP. Regulates axial patterning and cellular differentiation during late development. The activity of this receptor is mediated by G proteins. The protein is Cyclic AMP receptor 4 (carD) of Dictyostelium discoideum (Social amoeba).